The chain runs to 573 residues: DNA ligase (573 aa).

Glu-250 is an ATP binding site. Lys-252 serves as the catalytic N6-AMP-lysine intermediate. Arg-257, Arg-272, Glu-301, Phe-342, Arg-432, and Lys-438 together coordinate ATP.

This sequence belongs to the ATP-dependent DNA ligase family. It depends on Mg(2+) as a cofactor.

It catalyses the reaction ATP + (deoxyribonucleotide)n-3'-hydroxyl + 5'-phospho-(deoxyribonucleotide)m = (deoxyribonucleotide)n+m + AMP + diphosphate.. Functionally, DNA ligase that seals nicks in double-stranded DNA during DNA replication, DNA recombination and DNA repair. In Methanococcus maripaludis (strain C5 / ATCC BAA-1333), this protein is DNA ligase.